A 315-amino-acid chain; its full sequence is Ankyrin repeat domain-containing protein EMB506, chloroplastic (315 aa).

The N-terminal 39 residues, 1 to 39 (MVSSVLSIPPQTCLLPRLPISDSVNCKSKIVYCLSTSVR), are a transit peptide targeting the chloroplast. Polar residues predominate over residues 44-65 (KRQSTARTRSFTETNRRTPSVQ). A disordered region spans residues 44–106 (KRQSTARTRS…DNESDWEDDS (63 aa)). A compositionally biased stretch (acidic residues) spans 72–104 (EDPDDGSDSENEYEGEEEDGIGNDLDNESDWED). 5 ANK repeats span residues 151–180 (KSWKPLQTLALSMQIQLMDNLIENGLDIDD), 184–213 (DNQTALHKAIIGKKEAVISHLLRKGANPHL), 217–246 (DGAAPIHYAVQVGALQTVKLLFKYNVDVNV), 250–279 (EGWTPLHIAVQSRNRDITKILLTNGADKTR), and 283–307 (DGKLALDLALCFGRDFKSYDLVKLL).

In terms of assembly, interacts with AKR. No homodimerization observed. As to expression, expressed in roots, inflorescence stems, flowers, siliques, dry seeds and mature cauline leaves.

Its subcellular location is the plastid. The protein resides in the chloroplast. Functionally, involved in the initial differentiation of the proplastid during the embryo development. Also required for correct cotyledon, true leaf and cauline leaf margin development. The polypeptide is Ankyrin repeat domain-containing protein EMB506, chloroplastic (EMB506) (Arabidopsis thaliana (Mouse-ear cress)).